A 333-amino-acid polypeptide reads, in one-letter code: Methionyl-tRNA formyltransferase (333 aa).

106 to 109 (SLLP) serves as a coordination point for (6S)-5,6,7,8-tetrahydrofolate.

The protein belongs to the Fmt family.

It catalyses the reaction L-methionyl-tRNA(fMet) + (6R)-10-formyltetrahydrofolate = N-formyl-L-methionyl-tRNA(fMet) + (6S)-5,6,7,8-tetrahydrofolate + H(+). Functionally, attaches a formyl group to the free amino group of methionyl-tRNA(fMet). The formyl group appears to play a dual role in the initiator identity of N-formylmethionyl-tRNA by promoting its recognition by IF2 and preventing the misappropriation of this tRNA by the elongation apparatus. This Elusimicrobium minutum (strain Pei191) protein is Methionyl-tRNA formyltransferase.